The following is a 426-amino-acid chain: Glutamate-1-semialdehyde 2,1-aminomutase (426 aa).

An N6-(pyridoxal phosphate)lysine modification is found at Lys265.

The protein belongs to the class-III pyridoxal-phosphate-dependent aminotransferase family. HemL subfamily. In terms of assembly, homodimer. Pyridoxal 5'-phosphate is required as a cofactor.

The protein localises to the cytoplasm. The enzyme catalyses (S)-4-amino-5-oxopentanoate = 5-aminolevulinate. Its pathway is porphyrin-containing compound metabolism; protoporphyrin-IX biosynthesis; 5-aminolevulinate from L-glutamyl-tRNA(Glu): step 2/2. The sequence is that of Glutamate-1-semialdehyde 2,1-aminomutase from Sodalis glossinidius (strain morsitans).